Consider the following 163-residue polypeptide: MNAKGKVIKYGNNVDTDVIIPARYLNTSDPAELASHCMEDLDEKFTQRVQKGDVMVAGKNFGCGSSREHAPISIKASGISCVIAETFARIFYRNAVNIGLPIIECSEAAKDIKDNDQVEIDFDKGLIKNLTTGKTYQGQPFPEFMQEIISADGLIQYIKNSLS.

It belongs to the LeuD family. LeuD type 2 subfamily. In terms of assembly, heterodimer of LeuC and LeuD.

It carries out the reaction (2R,3S)-3-isopropylmalate = (2S)-2-isopropylmalate. Its pathway is amino-acid biosynthesis; L-leucine biosynthesis; L-leucine from 3-methyl-2-oxobutanoate: step 2/4. In terms of biological role, catalyzes the isomerization between 2-isopropylmalate and 3-isopropylmalate, via the formation of 2-isopropylmaleate. In Ruminiclostridium cellulolyticum (strain ATCC 35319 / DSM 5812 / JCM 6584 / H10) (Clostridium cellulolyticum), this protein is 3-isopropylmalate dehydratase small subunit.